A 385-amino-acid polypeptide reads, in one-letter code: MSPDTAADAAADPALQSSVLTVSLGERSYPIHIGPGLLGRAGALIAPLLRKPRVFVVTDATVAALHLDPLLASLGAAGIAHDHVVLPAGEATKSFSQLEELLDLLLAARFERSTTLLALGGGVIGDLVGFAAAILLRGVDFIQIPTTLLAQVDSSVGGKTGINTAYGKNLVGAFHQPRLVLADTTVLDTLPRRELLAGYGEVVKYGVIDDPAFFDWLEEHGSALIAGDGGARIHAVLTACRAKARVVAEDEREGGRRALLNLGHTFGHALEAETGFGPTLLHGEAVALGMVMALDLSVRLGLCPPADAARLRAHLDHVGLPTDPRRLEGAPAWNAERLLAAMDHDKKVEDGKVTFVLARGIGRSLLWREADTASVLATLRAAVAP.

NAD(+) contacts are provided by residues 122 to 126 (GVIGD), 146 to 147 (TT), K159, and K168. Residues E201, H264, and H282 each contribute to the Zn(2+) site.

It belongs to the sugar phosphate cyclases superfamily. Dehydroquinate synthase family. The cofactor is Co(2+). Zn(2+) serves as cofactor. NAD(+) is required as a cofactor.

It localises to the cytoplasm. It carries out the reaction 7-phospho-2-dehydro-3-deoxy-D-arabino-heptonate = 3-dehydroquinate + phosphate. Its pathway is metabolic intermediate biosynthesis; chorismate biosynthesis; chorismate from D-erythrose 4-phosphate and phosphoenolpyruvate: step 2/7. Its function is as follows. Catalyzes the conversion of 3-deoxy-D-arabino-heptulosonate 7-phosphate (DAHP) to dehydroquinate (DHQ). In Rhodospirillum rubrum (strain ATCC 11170 / ATH 1.1.1 / DSM 467 / LMG 4362 / NCIMB 8255 / S1), this protein is 3-dehydroquinate synthase.